A 371-amino-acid polypeptide reads, in one-letter code: Chaperone protein DnaJ (371 aa).

In terms of domain architecture, J spans 5-69; sequence DYYEVLGLSK…QKRAQYDQFG (65 aa). A CR-type zinc finger spans residues 133-215; it reads GKELNVEIPV…CHGSSKVRKR (83 aa). Residues Cys146, Cys149, Cys163, Cys166, Cys189, Cys192, Cys203, and Cys206 each coordinate Zn(2+). CXXCXGXG motif repeat units follow at residues 146–153, 163–170, 189–196, and 203–210; these read CDTCKGSG, CKHCSGSG, CGHCSGTG, and CTTCHGSS.

This sequence belongs to the DnaJ family. As to quaternary structure, homodimer. The cofactor is Zn(2+).

It is found in the cytoplasm. Functionally, participates actively in the response to hyperosmotic and heat shock by preventing the aggregation of stress-denatured proteins and by disaggregating proteins, also in an autonomous, DnaK-independent fashion. Unfolded proteins bind initially to DnaJ; upon interaction with the DnaJ-bound protein, DnaK hydrolyzes its bound ATP, resulting in the formation of a stable complex. GrpE releases ADP from DnaK; ATP binding to DnaK triggers the release of the substrate protein, thus completing the reaction cycle. Several rounds of ATP-dependent interactions between DnaJ, DnaK and GrpE are required for fully efficient folding. Also involved, together with DnaK and GrpE, in the DNA replication of plasmids through activation of initiation proteins. The protein is Chaperone protein DnaJ of Bacillus cereus (strain ATCC 14579 / DSM 31 / CCUG 7414 / JCM 2152 / NBRC 15305 / NCIMB 9373 / NCTC 2599 / NRRL B-3711).